Reading from the N-terminus, the 487-residue chain is Serralysin (487 aa).

A propeptide spanning residues 1-16 (MQSTKKAIEITESNFA) is cleaved from the precursor. A Zn(2+)-binding site is contributed by H192. Residue E193 is part of the active site. Zn(2+) is bound by residues H196, H202, and Y232. R269, G271, T273, D301, G303, G304, D306, T343, E345, G350, G352, D354, N359, A361, N363, G367, G368, A369, D372, G376, G377, G378, G379, D381, G385, G386, A387, G388, D390, D399, D406, and D416 together coordinate Ca(2+). Hemolysin-type calcium-binding repeat units follow at residues 348–365 (IGGSGNDVIVGNAANNVL) and 366–383 (KGGAGNDVLFGGGGADEL).

Belongs to the peptidase M10B family. It depends on Ca(2+) as a cofactor. Zn(2+) serves as cofactor.

The protein localises to the secreted. The enzyme catalyses Preferential cleavage of bonds with hydrophobic residues in P1'.. In terms of biological role, naturally present in the silkworm intestine and allows the emerging moth to dissolve its cocoon. In Serratia marcescens (strain ATCC 21074 / E-15), this protein is Serralysin.